We begin with the raw amino-acid sequence, 1009 residues long: Type VII secretion system accessory factor EsaA (1009 aa).

The next 6 helical transmembrane spans lie at 7–27 (IYAL…IFFV), 822–842 (ISPT…AYIF), 869–889 (VITS…VGLI), 903–923 (KFIL…TYLL), 928–948 (SIGM…MNNL), and 979–999 (IGLA…LNMF).

It belongs to the EsaA family. As to quaternary structure, homodimer. Interacts with EssB.

It is found in the cell membrane. Functionally, component of the type VII secretion system (Ess). Provides together with EssB and other components such as EssC and EssE a secretion platform across the cytoplasmic membrane in the host. This is Type VII secretion system accessory factor EsaA from Staphylococcus aureus (strain MSSA476).